A 311-amino-acid chain; its full sequence is Methionyl-tRNA formyltransferase (311 aa).

Residue 110-113 (SLLP) coordinates (6S)-5,6,7,8-tetrahydrofolate.

Belongs to the Fmt family.

It carries out the reaction L-methionyl-tRNA(fMet) + (6R)-10-formyltetrahydrofolate = N-formyl-L-methionyl-tRNA(fMet) + (6S)-5,6,7,8-tetrahydrofolate + H(+). In terms of biological role, attaches a formyl group to the free amino group of methionyl-tRNA(fMet). The formyl group appears to play a dual role in the initiator identity of N-formylmethionyl-tRNA by promoting its recognition by IF2 and preventing the misappropriation of this tRNA by the elongation apparatus. The polypeptide is Methionyl-tRNA formyltransferase (Streptococcus mutans serotype c (strain ATCC 700610 / UA159)).